The following is a 371-amino-acid chain: Cytochrome b (371 aa).

Helical transmembrane passes span 25–45, 69–90, 105–125, and 170–190; these read FGSM…FLAV, WMMQ…YIHI, WMSG…GYVL, and FFAL…LHII. Heme b contacts are provided by His-75 and His-89. 2 residues coordinate heme b: His-174 and His-188. Position 193 (His-193) interacts with a ubiquinone. Helical transmembrane passes span 218-238, 280-300, 312-332, and 339-358; these read HKDL…VSFF, LGGA…PFTH, LSQL…WAAT, and FIAI…LSIP.

The protein belongs to the cytochrome b family. In terms of assembly, the cytochrome bc1 complex contains 3 respiratory subunits (MT-CYB, CYC1 and UQCRFS1), 2 core proteins (UQCRC1 and UQCRC2) and probably 6 low-molecular weight proteins. It depends on heme b as a cofactor.

It localises to the mitochondrion inner membrane. Its function is as follows. Component of the ubiquinol-cytochrome c reductase complex (complex III or cytochrome b-c1 complex) that is part of the mitochondrial respiratory chain. The b-c1 complex mediates electron transfer from ubiquinol to cytochrome c. Contributes to the generation of a proton gradient across the mitochondrial membrane that is then used for ATP synthesis. This is Cytochrome b (MT-CYB) from Liasis olivaceus (Olive python).